Consider the following 299-residue polypeptide: UPF0282 protein TK1681 (299 aa).

It belongs to the UPF0282 family.

The sequence is that of UPF0282 protein TK1681 from Thermococcus kodakarensis (strain ATCC BAA-918 / JCM 12380 / KOD1) (Pyrococcus kodakaraensis (strain KOD1)).